Consider the following 345-residue polypeptide: MTVIVPIHGPAPAPAPVPERVGVLLVNLGTPDSCDTKGVRVYLREFLSDPRVIENQGLFWKLALNGIILNTRPARKAKDYQKIWNHEKNESPLKTITRAQAEKLAASLTDRSHLVVDWAMRYGNPSLRSRIEALVARGCSRLLVVPLYPQYSAATSATVCDQAFRVLRELRAQPTLRVTPPYYRDDAYIDALANSINAHLATLSFEPEMIVASFHGMPQAYIEKGDPYQSQCVATVDALRERMGLDEKKLLLTFQSRFGFDQWLQPYTDKTIEKLAKDGVRKLAVVMPGFASDCLETLEEIAQENAEIFMHNGGEEFSAIPCLNDSDDGIAVIRQLVMRELQGWL.

Fe cation-binding residues include histidine 215 and glutamate 296.

This sequence belongs to the ferrochelatase family.

The protein resides in the cytoplasm. The enzyme catalyses heme b + 2 H(+) = protoporphyrin IX + Fe(2+). It functions in the pathway porphyrin-containing compound metabolism; protoheme biosynthesis; protoheme from protoporphyrin-IX: step 1/1. Functionally, catalyzes the ferrous insertion into protoporphyrin IX. In Rhodopseudomonas palustris (strain BisB5), this protein is Ferrochelatase.